Here is a 178-residue protein sequence, read N- to C-terminus: uncharacterized protein (178 aa).

Residues 1 to 89 are disordered; the sequence is MSAKEGSSHP…GEKKGKTEKL (89 aa). 2 stretches are compositionally biased toward basic and acidic residues: residues 44 to 53 and 61 to 89; these read PYQKNEKVVV and AFLHPEEAEAKKESEKPSDGEKKGKTEKL.

This is an uncharacterized protein from Schizosaccharomyces pombe (strain 972 / ATCC 24843) (Fission yeast).